The primary structure comprises 152 residues: Ribosomal RNA large subunit methyltransferase H (152 aa).

S-adenosyl-L-methionine contacts are provided by residues L71, G101, and 120 to 125 (LSKLTF).

It belongs to the RNA methyltransferase RlmH family. As to quaternary structure, homodimer.

It is found in the cytoplasm. The enzyme catalyses pseudouridine(1915) in 23S rRNA + S-adenosyl-L-methionine = N(3)-methylpseudouridine(1915) in 23S rRNA + S-adenosyl-L-homocysteine + H(+). Functionally, specifically methylates the pseudouridine at position 1915 (m3Psi1915) in 23S rRNA. The sequence is that of Ribosomal RNA large subunit methyltransferase H from Thermosipho melanesiensis (strain DSM 12029 / CIP 104789 / BI429).